A 473-amino-acid chain; its full sequence is Envelope glycoprotein M (473 aa).

Over 1–32 (MGRPAPRGSPDSAPPTKGMTGARTAWWVWCVQ) the chain is Intravirion. Residues 33 to 53 (VATFVVSAVCVTGLLVLASVF) form a helical membrane-spanning segment. Residues 54–90 (RARFPCFYATASSYAGVNSTAEVRGGVAVPLRLDTQS) lie on the Virion surface side of the membrane. Residues 91-111 (LVGTYVITAVLLLAVAVYAVV) traverse the membrane as a helical segment. Residues 112-137 (GAVTSRYDRALDAGRRLAAARMAMPH) are Intravirion-facing. The helical transmembrane segment at 138–158 (ATLIAGNVCSWLLQITVLLLA) threads the bilayer. Topologically, residues 159–163 (HRISQ) are virion surface. Residues 164–184 (LAHLVYVLHFACLVYFAAHFC) traverse the membrane as a helical segment. The Intravirion portion of the chain corresponds to 185 to 216 (TRGVLSGTYLRQVHGLMELAPTHHRVVGPARA). A helical membrane pass occupies residues 217 to 237 (VLTNALLLGVFLCTADAAVSL). At 238 to 250 (NTIAAFNFNFSAP) the chain is on the virion surface side. A helical transmembrane segment spans residues 251-271 (GMLICLTVLFAILVVSLLLVV). Residues 272–280 (EGVLCHYVR) lie on the Intravirion side of the membrane. Residues 281–301 (VLVGPHLGAVAATGIVGLACE) form a helical membrane-spanning segment. Over 302–318 (HYYTNGYYVVETQWPGA) the chain is Virion surface. Residues 319–339 (QTGVRVALALVAAFALGMAVL) traverse the membrane as a helical segment. The Intravirion portion of the chain corresponds to 340 to 473 (RCTRAYLYHR…DPVYSTVRRW (134 aa)). Disordered regions lie at residues 371 to 399 (KRVRSSMRGSRDGRHRPAPGSPPGIPEYA) and 440 to 473 (HPRHLPDDDPIYDTVGGYDPEPAEDPVYSTVRRW).

Belongs to the herpesviridae glycoprotein M family. As to quaternary structure, interacts (via N-terminus) with gN (via N-terminus). The gM-gN heterodimer forms the gCII complex.

It localises to the virion membrane. It is found in the host Golgi apparatus. The protein resides in the host trans-Golgi network. Its subcellular location is the host endosome membrane. The protein localises to the host nucleus inner membrane. Envelope glycoprotein important for virion assembly and egress. Plays a role in the correct incorporation of gH-gL into virion membrane. Directs the glycoprotein N (gN) to the host trans-Golgi network. The chain is Envelope glycoprotein M from Human herpesvirus 1 (strain 17) (HHV-1).